The primary structure comprises 436 residues: GTPase Obg (436 aa).

One can recognise an Obg domain in the interval 2–160; sequence SMFLDTAKIK…RELQLELKIL (159 aa). In terms of domain architecture, OBG-type G spans 161-338; sequence ADVGLVGFPS…LLDATAELLD (178 aa). GTP is bound by residues 167-174, 192-196, 214-217, 284-287, and 319-321; these read GFPSVGKS, FTTIV, DLPG, NKMD, and SGL. Mg(2+) contacts are provided by S174 and T194. Positions 358–436 constitute an OCT domain; that stretch reads GFDEEEKAFE…IGKFEFEFVD (79 aa).

This sequence belongs to the TRAFAC class OBG-HflX-like GTPase superfamily. OBG GTPase family. In terms of assembly, monomer. It depends on Mg(2+) as a cofactor.

The protein resides in the cytoplasm. Its function is as follows. An essential GTPase which binds GTP, GDP and possibly (p)ppGpp with moderate affinity, with high nucleotide exchange rates and a fairly low GTP hydrolysis rate. Plays a role in control of the cell cycle, stress response, ribosome biogenesis and in those bacteria that undergo differentiation, in morphogenesis control. This is GTPase Obg from Streptococcus pneumoniae serotype 2 (strain D39 / NCTC 7466).